The sequence spans 476 residues: Glutamyl-tRNA(Gln) amidotransferase subunit A (476 aa).

Catalysis depends on charge relay system residues Lys76 and Ser151. The Acyl-ester intermediate role is filled by Ser175.

Belongs to the amidase family. GatA subfamily. Heterotrimer of A, B and C subunits.

It catalyses the reaction L-glutamyl-tRNA(Gln) + L-glutamine + ATP + H2O = L-glutaminyl-tRNA(Gln) + L-glutamate + ADP + phosphate + H(+). Its function is as follows. Allows the formation of correctly charged Gln-tRNA(Gln) through the transamidation of misacylated Glu-tRNA(Gln) in organisms which lack glutaminyl-tRNA synthetase. The reaction takes place in the presence of glutamine and ATP through an activated gamma-phospho-Glu-tRNA(Gln). The protein is Glutamyl-tRNA(Gln) amidotransferase subunit A of Chlorobium phaeobacteroides (strain DSM 266 / SMG 266 / 2430).